Here is a 689-residue protein sequence, read N- to C-terminus: Glycine--tRNA ligase beta subunit (689 aa).

Belongs to the class-II aminoacyl-tRNA synthetase family. In terms of assembly, tetramer of two alpha and two beta subunits.

The protein resides in the cytoplasm. The catalysed reaction is tRNA(Gly) + glycine + ATP = glycyl-tRNA(Gly) + AMP + diphosphate. The protein is Glycine--tRNA ligase beta subunit of Salmonella schwarzengrund (strain CVM19633).